We begin with the raw amino-acid sequence, 608 residues long: Chaperone protein DnaK (608 aa).

A Phosphothreonine; by autocatalysis modification is found at threonine 175.

It belongs to the heat shock protein 70 family.

Acts as a chaperone. This chain is Chaperone protein DnaK, found in Finegoldia magna (strain ATCC 29328 / DSM 20472 / WAL 2508) (Peptostreptococcus magnus).